A 186-amino-acid polypeptide reads, in one-letter code: Heat shock protein 23 (186 aa).

The region spanning 53–161 (VGASSGSSGA…KGNERIVQIQ (109 aa)) is the sHSP domain. Positions 163 to 186 (VGPAHLNVKENPKEAVEQDNGNDK) are disordered. Over residues 169–186 (NVKENPKEAVEQDNGNDK) the composition is skewed to basic and acidic residues.

The protein belongs to the small heat shock protein (HSP20) family.

The polypeptide is Heat shock protein 23 (Hsp23) (Drosophila melanogaster (Fruit fly)).